A 333-amino-acid chain; its full sequence is MTKLLNFVILASVLTVTAHALTYDLNNSDELFKNFAIKYNKTYVSDEERAIKLENFKNNLKMINEKNMASKYAVFDINEYSDLNKNALLRRTTGFRLGLKKNPSAFTMTECSVVVIKDEPQALLPETLDWRDKHGVTPVKNQMECGSCWAFSTIANIESLYNIKYDKALNLSEQHLVNCDNINNGCAGGLMHWALESILQEGGVVSAENEPYYGFDGVCKKSPFELSISGSRRYVLQNENKLRELLVVNGPISVAIDVSDLINYKAGIADICENNEGLNHAVLLVGYGVKNDVPYWILKNSWGAEWGEEGYFRVQRDKNSCGMMNEYASSAIL.

An N-terminal signal peptide occupies residues 1–20 (MTKLLNFVILASVLTVTAHA). A propeptide spans 21–124 (LTYDLNNSDE…VIKDEPQALL (104 aa)) (activation peptide). Cystine bridges form between Cys-145–Cys-186, Cys-179–Cys-219, and Cys-272–Cys-321. The active site involves Cys-148. The N-linked (GlcNAc...) asparagine; by host glycan is linked to Asn-170. Active-site residues include His-280 and Asn-300.

It belongs to the peptidase C1 family. In terms of processing, synthesized as an inactive proenzyme and activated by proteolytic removal of the inhibitory propeptide.

It carries out the reaction Endopeptidase of broad specificity, hydrolyzing substrates of both cathepsin L and cathepsin B.. In terms of biological role, cysteine protease that plays an essential role in host liquefaction to facilitate horizontal transmission of the virus. May participate in the degradation of foreign protein expressed by the baculovirus system. This chain is Viral cathepsin (VCATH), found in Cydia pomonella granulosis virus (isolate Mexico/1963) (CpGV).